The primary structure comprises 618 residues: Keratin, type I cytoskeletal 9 (618 aa).

Positions 1-49 (MSFRQISSSFRSSSGSSCGGGGGRGASRGSMRSSFGRSSRAGGESRFGS) are disordered. Residues 1 to 137 (MSFRQISSSF…GGEGSILNTN (137 aa)) form a head region. The segment covering 7 to 16 (SSSFRSSSGS) has biased composition (low complexity). Phosphoserine is present on residues S14 and S17. Residues 17 to 26 (SCGGGGGRGA) are compositionally biased toward gly residues. Over residues 27 to 49 (SRGSMRSSFGRSSRAGGESRFGS) the composition is skewed to low complexity. A coil 1A region spans residues 138–173 (EKVVMQNLNSRLASYMDKVQELEEDNANLEKQIQEW). The region spanning 138–450 (EKVVMQNLNS…KLLEGGQQDF (313 aa)) is the IF rod domain. The segment at 174-192 (YSRKGNRVFQKDYSHYYNT) is linker 1. Positions 193–284 (IEDLKDRIVD…KSHKEEMNQL (92 aa)) are coil 1B. The tract at residues 285–307 (TGLNDGDVNVEINVAPSTDLTQV) is linker 12. Residues 308 to 446 (LNDMREEYEH…ETYRKLLEGG (139 aa)) form a coil 2 region. A tail region spans residues 447-609 (QQDFESSGAG…GGGNTRPSQS (163 aa)). The segment at 449–618 (DFESSGAGQI…SQSSQIPRLR (170 aa)) is disordered. Residues 456 to 603 (GQIGFGSGKG…GSGGSYGGGN (148 aa)) show a composition bias toward gly residues. Over residues 607-618 (SQSQSSQIPRLR) the composition is skewed to low complexity.

The protein belongs to the intermediate filament family. As to quaternary structure, heterotetramer of two type I and two type II keratins. Expressed in the perinuclear ring of spermatid manchettes within testis and in keratinocytes of the suprabasal layer of footpad epidermis (at protein level).

May serve an important special function either in the mature palmar and plantar skin tissue or in the morphogenetic program of the formation of these tissues. Plays a role in keratin filament assembly. May be involved in spermatid nuclear shaping and sperm development. The protein is Keratin, type I cytoskeletal 9 (Krt9) of Rattus norvegicus (Rat).